The primary structure comprises 162 residues: Regulator of sigma D (162 aa).

It belongs to the Rsd/AlgQ family. In terms of assembly, interacts with RpoD.

Its subcellular location is the cytoplasm. In terms of biological role, binds RpoD and negatively regulates RpoD-mediated transcription activation by preventing the interaction between the primary sigma factor RpoD with the catalytic core of the RNA polymerase and with promoter DNA. May be involved in replacement of the RNA polymerase sigma subunit from RpoD to RpoS during the transition from exponential growth to the stationary phase. The sequence is that of Regulator of sigma D from Salmonella choleraesuis (strain SC-B67).